Here is a 317-residue protein sequence, read N- to C-terminus: DNA-directed RNA polymerase subunit alpha (317 aa).

The segment at 1–230 (MIEIEMEKPK…EHLNLFITLT (230 aa)) is alpha N-terminal domain (alpha-NTD). An alpha C-terminal domain (alpha-CTD) region spans residues 247–317 (KEKVLEMTIE…LGLGLRPSDE (71 aa)).

The protein belongs to the RNA polymerase alpha chain family. As to quaternary structure, homodimer. The RNAP catalytic core consists of 2 alpha, 1 beta, 1 beta' and 1 omega subunit. When a sigma factor is associated with the core the holoenzyme is formed, which can initiate transcription.

It catalyses the reaction RNA(n) + a ribonucleoside 5'-triphosphate = RNA(n+1) + diphosphate. Its function is as follows. DNA-dependent RNA polymerase catalyzes the transcription of DNA into RNA using the four ribonucleoside triphosphates as substrates. This Alkaliphilus oremlandii (strain OhILAs) (Clostridium oremlandii (strain OhILAs)) protein is DNA-directed RNA polymerase subunit alpha.